The following is a 144-amino-acid chain: Granulocyte-macrophage colony-stimulating factor (144 aa).

Positions 1–17 (MWLQNLLFLGIVVYSFS) are cleaved as a signal peptide. O-linked (GalNAc...) serine glycosylation is present at Ser22. Thr27 is a glycosylation site (O-linked (GalNAc...) threonine). Cystine bridges form between Cys71/Cys113 and Cys105/Cys138. A glycan (N-linked (GlcNAc...) asparagine) is linked at Asn86.

It belongs to the GM-CSF family. Monomer. The signaling GM-CSF receptor complex is a dodecamer of two head-to-head hexamers of two alpha, two beta, and two ligand subunits.

It localises to the secreted. Functionally, cytokine that stimulates the growth and differentiation of hematopoietic precursor cells from various lineages, including granulocytes, macrophages, eosinophils and erythrocytes. The sequence is that of Granulocyte-macrophage colony-stimulating factor (Csf2) from Rattus norvegicus (Rat).